A 988-amino-acid polypeptide reads, in one-letter code: MDDLEQAIVISFETGAVDSALKSQAVTYCQQIKETPSICSICIEKLWFSKLVQVQFWCLQTLQDVLRVKYGSMSLDEQSYVRKSVFSMACLEVIDNENAGRVVEGPPFVKNKLAQVLATLIYYEYPLIWSSVFLDFMLHLCKGAVVIDMFCRVLNALDDELISLDYPRTPEEISVAARVKDAMRQQCVPQIARAWYDIVSMYKNSDPDLSATVLDCMRRFVSWIDIGLVANDAFVPLLFELILSDGLSEQVRGAAAGCVLAMVSKRMDPQSKLPLLQTLQISRVFGLVSGDVDSDLVSKVSALLTGYAVEVLECHKRLNSEDTKAVSMDLLNEVLPSVFYVMQKCEVDSTFSIVQFLLGYVSTLKGLPALKEKQLLHITQILEVIRIQICYDPMYRNNLNSLDKTGLEEEDRMSEFRKDLFVLLRTVGRVAPEVTQHFIRNSLANAVESSSESNVEEVEAALSLLYSFGESMTEEAMKTGSGCLSELIPMLLTTQFPGHSHRLVALVYLENITRYMKFIQENSQYIPNVLGAFLDDRGLHHQNFYVSRRAGYLFMRVVKLLKSKLVPFIDKILQNLQDTLSQLTTMNFASRELTGTEDGSHIFEAIGIIIGLEDVPAEKQSDYLSLLLTPLCQQIEAGLVQAKVASSEDFPVKIANIQFAIVAINALSKGFNERLVTASRPGIGLMFKQTLDVLLRVLIEFPKVEPLRSKVTSFIHRMVDTLGSAVFPYLPKALEQLLADSEPKEMVGFMVLLNQLICKFNSALHDILEEVYPVVAVRIFNVIPRDGLPSRPGAVTEEMRELIELQRMLYTFLHVIATHDLSSVFLTPKSRAYLDPMMQLVLNTSCNHKDITVRKACVQIFIKLIKDWCAEPYSEEKVPGFQNFVIEAFATNCCLYSVLDKSFNFSDANTHALFGEIITAQKVMYEKFGNTFLMHLMSKSFPSAHIPQDLAEQYCQKLQGNDIRSLKSYYQSLIENLRLQQNGSHVFR.

This sequence belongs to the exportin family. In terms of tissue distribution, expressed in young leaves, growing leaf blades, young floral organs and root tips.

It localises to the nucleus. The protein localises to the cytoplasm. Probable tRNA nucleus export receptor which regulates tRNA processing and facilitates tRNA translocation across the nuclear pore complex. Is required for proper activity of the shoot apical meristem (SAM) and correct leaf initiation at different developmental stages, and may play a role in floral patterning. The polypeptide is Exportin-T (PSD) (Arabidopsis thaliana (Mouse-ear cress)).